The chain runs to 465 residues: tRNA-2-methylthio-N(6)-dimethylallyladenosine synthase (465 aa).

The 116-residue stretch at 26–141 folds into the MTTase N-terminal domain; that stretch reads MRAHIITYGC…LPEALKANER (116 aa). [4Fe-4S] cluster-binding residues include Cys-35, Cys-71, Cys-104, Cys-173, Cys-177, and Cys-180. In terms of domain architecture, Radical SAM core spans 159 to 388; that stretch reads PKGALSAHVT…IEKQKEWSYR (230 aa). The region spanning 391-453 is the TRAM domain; sequence LEWVGKTVEV…PHLLFGEVVG (63 aa).

Belongs to the methylthiotransferase family. MiaB subfamily. In terms of assembly, monomer. It depends on [4Fe-4S] cluster as a cofactor.

It is found in the cytoplasm. It catalyses the reaction N(6)-dimethylallyladenosine(37) in tRNA + (sulfur carrier)-SH + AH2 + 2 S-adenosyl-L-methionine = 2-methylsulfanyl-N(6)-dimethylallyladenosine(37) in tRNA + (sulfur carrier)-H + 5'-deoxyadenosine + L-methionine + A + S-adenosyl-L-homocysteine + 2 H(+). Functionally, catalyzes the methylthiolation of N6-(dimethylallyl)adenosine (i(6)A), leading to the formation of 2-methylthio-N6-(dimethylallyl)adenosine (ms(2)i(6)A) at position 37 in tRNAs that read codons beginning with uridine. The polypeptide is tRNA-2-methylthio-N(6)-dimethylallyladenosine synthase (Thermus thermophilus (strain ATCC 27634 / DSM 579 / HB8)).